Reading from the N-terminus, the 444-residue chain is MSHKPAHLLLVDDDPGLLKLLGLRLTSEGYSVVTAESGAEGLRVLNREKVDLVISDLRMDEMDGMQLFAEIQKVQPGMPVIILTAHGSIPDAVAATQQGVFSFLTKPVDKDALYQAIDDALEQSAPATDERWREAIVTRSPLMLRLLEQARLVAQSDVSVLINGQSGTGKEIFAQAIHNASPRNSKPFIAINCGALPEQLLESELFGHARGAFTGAVSNREGLFQAAEGGTLFLDEIGDMPAPLQVKLLRVLQERKVRPLGSNRDIDINVRIISATHRDLPKAMARGEFREDLYYRLNVVSLKIPALAERTEDIPLLANHLLRQAAERHKPFVRAFSTDAMKRLMTASWPGNVRQLVNVIEQCVALTSSPVISDALVEQALEGENTALPTFVEARNQFELNYLRKLLQITKGNVTHAARMAGRNRTEFYKLLSRHELDANDFKE.

One can recognise a Response regulatory domain in the interval 7–121 (HLLLVDDDPG…ALYQAIDDAL (115 aa)). The residue at position 56 (D56) is a 4-aspartylphosphate. The Sigma-54 factor interaction domain maps to 136–366 (IVTRSPLMLR…VNVIEQCVAL (231 aa)). ATP is bound by residues 164-171 (GQSGTGKE) and 227-236 (AEGGTLFLDE). Residues 414 to 433 (VTHAARMAGRNRTEFYKLLS) constitute a DNA-binding region (H-T-H motif).

Post-translationally, phosphorylated by GlrK.

Its subcellular location is the cytoplasm. Functionally, member of the two-component regulatory system GlrR/GlrK that up-regulates transcription of the glmY sRNA when cells enter the stationary growth phase. Regulates glmY transcription by binding to three conserved sites in the purL-glmY intergenic region. The polypeptide is Transcriptional regulatory protein GlrR (glrR) (Escherichia coli (strain K12)).